Here is a 389-residue protein sequence, read N- to C-terminus: MSGEMFGDEVDIKARLRAAEVMYKKFHRLISDVIKGRPPKLEIPKRTLSNTIFDPERGILVIGEEKLEREFLNVGESRRFMQTLLMASIIYQSLIENEYPTIRDLYYKGKHTIVYRDYSGRKREENTWDEQKESDSVIQDIEVYTGLFREDMLILSKEKGKVVGNMRIRSGGDVIDLSKLGHGAYAIEPTPDLIEFLDVDAEFVLVVEKDAVFQQLHRAGFWKKYKALLVTGSGQPDRATRRFVRRLHEELKLPVYIITDSDPYGWYIYSVYKVGSITLSYESERLATPKAKFLGVQMTDIFGYRGKKPYLSEAERKKFMIKATDKDIKRAKELLNYSWIGKNRRWNVEIRLFLKHLVKLEIEAIASKGLKFFAYQYIPEKIETGDWID.

In terms of domain architecture, Topo IIA-type catalytic spans 13–161; that stretch reads KARLRAAEVM…MLILSKEKGK (149 aa). The active-site O-(5'-phospho-DNA)-tyrosine intermediate is the Tyr107. Mg(2+) contacts are provided by Glu208 and Asp260.

The protein belongs to the TOP6A family. Homodimer. Heterotetramer of two Top6A and two Top6B chains. Mg(2+) serves as cofactor.

It catalyses the reaction ATP-dependent breakage, passage and rejoining of double-stranded DNA.. In terms of biological role, relaxes both positive and negative superturns and exhibits a strong decatenase activity. This is Type 2 DNA topoisomerase 6 subunit A from Aeropyrum pernix (strain ATCC 700893 / DSM 11879 / JCM 9820 / NBRC 100138 / K1).